The primary structure comprises 364 residues: UDP-N-acetylglucosamine--N-acetylmuramyl-(pentapeptide) pyrophosphoryl-undecaprenol N-acetylglucosamine transferase (364 aa).

Residues 10–12 (TGG), Asn128, Arg170, Ser199, Ile250, and Gln295 each bind UDP-N-acetyl-alpha-D-glucosamine.

Belongs to the glycosyltransferase 28 family. MurG subfamily.

It localises to the cell inner membrane. The catalysed reaction is di-trans,octa-cis-undecaprenyl diphospho-N-acetyl-alpha-D-muramoyl-L-alanyl-D-glutamyl-meso-2,6-diaminopimeloyl-D-alanyl-D-alanine + UDP-N-acetyl-alpha-D-glucosamine = di-trans,octa-cis-undecaprenyl diphospho-[N-acetyl-alpha-D-glucosaminyl-(1-&gt;4)]-N-acetyl-alpha-D-muramoyl-L-alanyl-D-glutamyl-meso-2,6-diaminopimeloyl-D-alanyl-D-alanine + UDP + H(+). The protein operates within cell wall biogenesis; peptidoglycan biosynthesis. Cell wall formation. Catalyzes the transfer of a GlcNAc subunit on undecaprenyl-pyrophosphoryl-MurNAc-pentapeptide (lipid intermediate I) to form undecaprenyl-pyrophosphoryl-MurNAc-(pentapeptide)GlcNAc (lipid intermediate II). In Chlorobium phaeobacteroides (strain DSM 266 / SMG 266 / 2430), this protein is UDP-N-acetylglucosamine--N-acetylmuramyl-(pentapeptide) pyrophosphoryl-undecaprenol N-acetylglucosamine transferase.